Reading from the N-terminus, the 256-residue chain is ATP-dependent dethiobiotin synthetase BioD (256 aa).

ATP is bound at residue 13 to 18 (EVGKTY). T17 is a binding site for Mg(2+). K38 is an active-site residue. Substrate is bound at residue S42. Residues D56, 118–121 (EGAG), and 187–188 (NR) contribute to the ATP site. Positions 56 and 118 each coordinate Mg(2+).

It belongs to the dethiobiotin synthetase family. Homodimer. Mg(2+) is required as a cofactor.

It is found in the cytoplasm. It catalyses the reaction (7R,8S)-7,8-diammoniononanoate + CO2 + ATP = (4R,5S)-dethiobiotin + ADP + phosphate + 3 H(+). It participates in cofactor biosynthesis; biotin biosynthesis; biotin from 7,8-diaminononanoate: step 1/2. In terms of biological role, catalyzes a mechanistically unusual reaction, the ATP-dependent insertion of CO2 between the N7 and N8 nitrogen atoms of 7,8-diaminopelargonic acid (DAPA, also called 7,8-diammoniononanoate) to form a ureido ring. The chain is ATP-dependent dethiobiotin synthetase BioD from Rhodopirellula baltica (strain DSM 10527 / NCIMB 13988 / SH1).